The following is a 205-amino-acid chain: Ribosomal RNA small subunit methyltransferase G (205 aa).

S-adenosyl-L-methionine-binding positions include glycine 73, leucine 78, 124-125 (VE), and arginine 139.

The protein belongs to the methyltransferase superfamily. RNA methyltransferase RsmG family.

It is found in the cytoplasm. The enzyme catalyses guanosine(527) in 16S rRNA + S-adenosyl-L-methionine = N(7)-methylguanosine(527) in 16S rRNA + S-adenosyl-L-homocysteine. Its function is as follows. Specifically methylates the N7 position of guanine in position 527 of 16S rRNA. The chain is Ribosomal RNA small subunit methyltransferase G from Methylobacillus flagellatus (strain ATCC 51484 / DSM 6875 / VKM B-1610 / KT).